A 151-amino-acid polypeptide reads, in one-letter code: Small ribosomal subunit protein uS15 (151 aa).

An N6-acetyllysine; alternate modification is found at Lys27. Lys27 is modified (N6-succinyllysine; alternate). Residue Lys27 forms a Glycyl lysine isopeptide (Lys-Gly) (interchain with G-Cter in ubiquitin) linkage. The residue at position 30 (Ser30) is a Phosphoserine. The residue at position 34 (Lys34) is an N6-succinyllysine. Position 38 is a phosphotyrosine (Tyr38). Lys43 is covalently cross-linked (Glycyl lysine isopeptide (Lys-Gly) (interchain with G-Cter in SUMO2)).

It belongs to the universal ribosomal protein uS15 family. As to quaternary structure, component of the small ribosomal subunit. Part of the small subunit (SSU) processome, composed of more than 70 proteins and the RNA chaperone small nucleolar RNA (snoRNA) U3. Ubiquitinated at Lys-27 by RNF14 and RNF25 in response to ribosome collisions (ribosome stalling).

The protein localises to the cytoplasm. Its subcellular location is the nucleus. The protein resides in the nucleolus. Functionally, component of the small ribosomal subunit. The ribosome is a large ribonucleoprotein complex responsible for the synthesis of proteins in the cell. Part of the small subunit (SSU) processome, first precursor of the small eukaryotic ribosomal subunit. During the assembly of the SSU processome in the nucleolus, many ribosome biogenesis factors, an RNA chaperone and ribosomal proteins associate with the nascent pre-rRNA and work in concert to generate RNA folding, modifications, rearrangements and cleavage as well as targeted degradation of pre-ribosomal RNA by the RNA exosome. The sequence is that of Small ribosomal subunit protein uS15 from Homo sapiens (Human).